The primary structure comprises 772 residues: Endoplasmic reticulum membrane sensor NFE2L1 (772 aa).

Residues 7–24 (YLTEGLLQFTILLSLIGV) traverse the membrane as a helical; Signal-anchor for type II membrane protein segment. The tract at residues 108–148 (DPEGSVSGSQPNSGLALESSSGLQDVTGPDNGVRESETEQG) is disordered. A compositionally biased stretch (polar residues) spans 113-131 (VSGSQPNSGLALESSSGLQ). Positions 191–199 (VFDYSHRQK) are cholesterol recognition/amino acid consensus (CRAC) region. N348 and N360 each carry an N-linked (GlcNAc...) asparagine glycan. Positions 379–383 (SPEVE) are CPD. N-linked (GlcNAc...) asparagine glycans are attached at residues N412 and N423. Disordered stretches follow at residues 470–532 (EEEF…DSET) and 582–613 (SALDSADLPPPSALKKGSKEKQADFLDKQMSR). The short motif at 476–480 (DSGLS) is the Destruction motif element. Positions 476–523 (DSGLSLDSSHSPSSLSSSEGSSSSSSSSSSSSSSASSSASSSFSEEGA) are enriched in low complexity. Residue S528 is modified to Phosphoserine; by CK2. Residues 598–613 (GSKEKQADFLDKQMSR) are compositionally biased toward basic and acidic residues. The residue at position 599 (S599) is a Phosphoserine; by PKA. Positions 654–717 (LIRDIRRRGK…RQMKQKVQSL (64 aa)) constitute a bZIP domain. A basic motif region spans residues 656–675 (RDIRRRGKNKMAAQNCRKRK). The leucine-zipper stretch occupies residues 682–696 (LERDVEDLQRDKARL).

Belongs to the bZIP family. CNC subfamily. In terms of assembly, interacts with KEAP1. Interacts (via CPD region) with FBXW7; leading to its ubiquitination and degradation. Interacts with SYVN1/HRD1; leading to its ubiquitination and degradation. Interacts (when ubiquitinated) with DDI2; leading to its cleavage. As to quaternary structure, interacts (via the bZIP domain) with small MAF protein (MAFF, MAFG or MAFK); required for binding to antioxidant response elements (AREs) on DNA. Interacts (via Destruction motif) with BTRC; leading to its ubiquitination and degradation. Interacts with CEBPB; the heterodimer represses expression of DSPP during odontoblast differentiation. Interacts with MOTS-c, a peptide produced by the mitochondrially encoded 12S rRNA MT-RNR1. Cleaved at Leu-104 by the aspartyl protease DDI2 following retrotranslocation, releasing the protein from the endoplasmic reticulum membrane and forming the transcription factor NRF1 that translocates into the nucleus. Ubiquitination is prerequisite for cleavage by aspartyl protease DDI2. In terms of processing, N-glycosylated in normal conditions, when it has a single-pass type II membrane protein topology, with the DNA-binding domain facing the endoplasmic reticulum lumen. Deglycosylated during retrotranslocation to the cytosolic side of the membrane, to have a single-pass type III membrane protein topology with the major part of the protein facing the cytosol. Post-translationally, ubiquitinated by the SCF(FBXW7) complex and SYVN1/HRD1, leading to its degradation by the proteasome. Ubiquitinated during retrotranslocation to the cytosolic side of the membrane: ubiquitination does not lead to degradation and is required for processing by the aspartyl protease DDI2 and subsequent release from the endoplasmic reticulum membrane. Phosphorylation by CK2 at Ser-528 inhibits transcription factor activity, possibly by affecting DNA-binding activity. Phosphorylation at Ser-599 is required for interaction with CEBPB. In terms of processing, ubiquitinated by the SCF(BTRC) complex in the nucleus, leading to its degradation by the proteasome.

The protein resides in the endoplasmic reticulum membrane. It localises to the nucleus. Its function is as follows. Endoplasmic reticulum membrane sensor that translocates into the nucleus in response to various stresses to act as a transcription factor. Constitutes a precursor of the transcription factor NRF1. Able to detect various cellular stresses, such as cholesterol excess, oxidative stress or proteasome inhibition. In response to stress, it is released from the endoplasmic reticulum membrane following cleavage by the protease DDI2 and translocates into the nucleus to form the transcription factor NRF1. Acts as a key sensor of cholesterol excess: in excess cholesterol conditions, the endoplasmic reticulum membrane form of the protein directly binds cholesterol via its CRAC motif, preventing cleavage and release of the transcription factor NRF1, thereby allowing expression of genes promoting cholesterol removal, such as CD36. Involved in proteasome homeostasis: in response to proteasome inhibition, it is released from the endoplasmic reticulum membrane, translocates to the nucleus and activates expression of genes encoding proteasome subunits. CNC-type bZIP family transcription factor that translocates to the nucleus and regulates expression of target genes in response to various stresses. Heterodimerizes with small-Maf proteins (MAFF, MAFG or MAFK) and binds DNA motifs including the antioxidant response elements (AREs), which regulate expression of genes involved in oxidative stress response. Activates or represses expression of target genes, depending on the context. Plays a key role in cholesterol homeostasis by acting as a sensor of cholesterol excess: in low cholesterol conditions, translocates into the nucleus and represses expression of genes involved in defense against cholesterol excess, such as CD36. In excess cholesterol conditions, the endoplasmic reticulum membrane form of the protein directly binds cholesterol via its CRAC motif, preventing cleavage and release of the transcription factor NRF1, thereby allowing expression of genes promoting cholesterol removal. Critical for redox balance in response to oxidative stress: acts by binding the AREs motifs on promoters and mediating activation of oxidative stress response genes, such as GCLC, GCLM, GSS, MT1 and MT2. Plays an essential role during fetal liver hematopoiesis: probably has a protective function against oxidative stress and is involved in lipid homeostasis in the liver. Involved in proteasome homeostasis: in response to proteasome inhibition, mediates the 'bounce-back' of proteasome subunits by translocating into the nucleus and activating expression of genes encoding proteasome subunits. Also involved in regulating glucose flux. Together with CEBPB; represses expression of DSPP during odontoblast differentiation. In response to ascorbic acid induction, activates expression of SP7/Osterix in osteoblasts. In Homo sapiens (Human), this protein is Endoplasmic reticulum membrane sensor NFE2L1 (NFE2L1).